We begin with the raw amino-acid sequence, 253 residues long: Small ribosomal subunit protein uS3 (253 aa).

The 69-residue stretch at 39-107 (VRRALKKRLY…EVHLNIVEIR (69 aa)) folds into the KH type-2 domain. The interval 215 to 253 (LDKRLAGESGPAGEGGGRERGDRPDRGPRRERRGEPSNA) is disordered. Residues 230 to 253 (GGRERGDRPDRGPRRERRGEPSNA) show a composition bias toward basic and acidic residues.

Belongs to the universal ribosomal protein uS3 family. Part of the 30S ribosomal subunit. Forms a tight complex with proteins S10 and S14.

Binds the lower part of the 30S subunit head. Binds mRNA in the 70S ribosome, positioning it for translation. This is Small ribosomal subunit protein uS3 from Phenylobacterium zucineum (strain HLK1).